We begin with the raw amino-acid sequence, 1432 residues long: ABC transporter B family member 3 (1432 aa).

Disordered stretches follow at residues 1-21 and 48-149; these read MDDG…EEEI and ITQP…KTEE. Composition is skewed to low complexity over residues 52 to 62, 76 to 106, and 118 to 135; these read SNNNNNSNNNN, NNNN…FNNN, and NTNE…NNND. Residues 117-163 are a coiled coil; it reads ENTNENNNKNNNNNNNNNDDYNDGADERVKTEEEIKKEAENELNQSV. The ABC transmembrane type-1 1 domain maps to 180–479; sequence MFLGTIAAVI…ASPCLALFAQ (300 aa). 6 consecutive transmembrane segments (helical) span residues 185-205, 232-252, 303-323, 325-345, 410-430, and 457-477; these read IAAV…GLVV, LLML…LWMI, KVGR…IGFT, GWQL…GGFF, GLGL…AFWY, and FFAV…LALF. An ABC transporter 1 domain is found at 514–750; the sequence is IEFKDVGFHY…QGLYFDLVEK (237 aa). 549-556 serves as a coordination point for ATP; it reads GDSGGGKS. The disordered stretch occupies residues 787-819; the sequence is KRSLRKNESESNKKDKEDSNNKKKKKSNKKKVE. Over residues 791–807 the composition is skewed to basic and acidic residues; the sequence is RKNESESNKKDKEDSNN. Residues 837 to 1157 form the ABC transmembrane type-1 2 domain; the sequence is WCFGFLSAVG…ASSFAPDLAK (321 aa). A run of 6 helical transmembrane segments spans residues 838-858, 882-902, 968-988, 989-1009, 1060-1080, and 1134-1154; these read CFGF…AMVF, LMFV…GFLF, MVGG…VIIA, CFPL…GFSS, ISGF…CLSF, and VFFA…FAPD. In terms of domain architecture, ABC transporter 2 spans 1192–1428; the sequence is IEFKNLHFSY…EGPYSQLWYN (237 aa). 1227–1234 serves as a coordination point for ATP; sequence GDSGGGKS.

The protein belongs to the ABC transporter superfamily. ABCB family. Multidrug resistance exporter (TC 3.A.1.201) subfamily.

It is found in the membrane. In Dictyostelium discoideum (Social amoeba), this protein is ABC transporter B family member 3 (abcB3).